A 129-amino-acid chain; its full sequence is MSMERQLKEQFAENREIVEALLGDGSDADSEYVIEHHFSSTNFDKLEKAAVDAFKLGFEVNDAEEMELEDGSEIFCFDAIANHKLDVALLDKACEQLMQVAHKQKVDYDGWGTYFIGDEIEEDDEEEQA.

This sequence belongs to the RraB family. Interacts with the C-terminal region of Rne.

It localises to the cytoplasm. Its function is as follows. Globally modulates RNA abundance by binding to RNase E (Rne) and regulating its endonucleolytic activity. Can modulate Rne action in a substrate-dependent manner by altering the composition of the degradosome. The protein is Regulator of ribonuclease activity B of Shewanella denitrificans (strain OS217 / ATCC BAA-1090 / DSM 15013).